We begin with the raw amino-acid sequence, 242 residues long: 1-(5-phosphoribosyl)-5-[(5-phosphoribosylamino)methylideneamino] imidazole-4-carboxamide isomerase (242 aa).

The Proton acceptor role is filled by Asp8. Asp129 acts as the Proton donor in catalysis.

The protein belongs to the HisA/HisF family.

Its subcellular location is the cytoplasm. It catalyses the reaction 1-(5-phospho-beta-D-ribosyl)-5-[(5-phospho-beta-D-ribosylamino)methylideneamino]imidazole-4-carboxamide = 5-[(5-phospho-1-deoxy-D-ribulos-1-ylimino)methylamino]-1-(5-phospho-beta-D-ribosyl)imidazole-4-carboxamide. Its pathway is amino-acid biosynthesis; L-histidine biosynthesis; L-histidine from 5-phospho-alpha-D-ribose 1-diphosphate: step 4/9. The sequence is that of 1-(5-phosphoribosyl)-5-[(5-phosphoribosylamino)methylideneamino] imidazole-4-carboxamide isomerase from Syntrophus aciditrophicus (strain SB).